The chain runs to 342 residues: Ferredoxin--NADP reductase (342 aa).

Residues Cys17, Asp36, Gln44, Tyr49, Val89, Phe124, Asp289, and Thr330 each coordinate FAD.

It belongs to the ferredoxin--NADP reductase type 2 family. In terms of assembly, homodimer. It depends on FAD as a cofactor.

It carries out the reaction 2 reduced [2Fe-2S]-[ferredoxin] + NADP(+) + H(+) = 2 oxidized [2Fe-2S]-[ferredoxin] + NADPH. In Nitrobacter winogradskyi (strain ATCC 25391 / DSM 10237 / CIP 104748 / NCIMB 11846 / Nb-255), this protein is Ferredoxin--NADP reductase.